The primary structure comprises 246 residues: Type III pantothenate kinase (246 aa).

6–13 (DVGNSRIK) contributes to the ATP binding site. Substrate is bound by residues Tyr-93 and 100–103 (GSDR). Asp-102 serves as the catalytic Proton acceptor. Residue Thr-125 coordinates ATP. Thr-175 contributes to the substrate binding site.

This sequence belongs to the type III pantothenate kinase family. Homodimer. NH4(+) is required as a cofactor. The cofactor is K(+).

It localises to the cytoplasm. It catalyses the reaction (R)-pantothenate + ATP = (R)-4'-phosphopantothenate + ADP + H(+). The protein operates within cofactor biosynthesis; coenzyme A biosynthesis; CoA from (R)-pantothenate: step 1/5. Catalyzes the phosphorylation of pantothenate (Pan), the first step in CoA biosynthesis. This is Type III pantothenate kinase from Dichelobacter nodosus (strain VCS1703A).